The chain runs to 1095 residues: Solute carrier family 12 member 1 (1095 aa).

Over 1 to 173 (MSVNIPSNSV…EEDVTGVVKF (173 aa)) the chain is Cytoplasmic. The RFXV motif signature appears at 16-19 (RFQV). The segment at 26 to 45 (HGSGAAMSDSTDPPHYEETS) is disordered. 2 positions are modified to phosphoserine: Ser-57 and Ser-87. A phosphothreonine mark is found at Thr-91, Thr-96, Thr-101, and Thr-114. Phosphoserine is present on Ser-116. Ser-126 is subject to Phosphoserine; by AMPK. Ser-144 is modified (phosphoserine). Residues 174–194 (GWVKGVLVRCMLNIWGVMLFI) form a helical membrane-spanning segment. The Extracellular segment spans residues 195 to 197 (RLS). Residues 198–218 (WIVGEAGIGLGVIIIGLSVVV) traverse the membrane as a helical segment. Residues 219-255 (TTLTGISMSAICTNGVVRGGGAYYLISRSLGPEFGGS) are Cytoplasmic-facing. Residues 256–276 (IGLIFRFANAVRVAMYVVGFA) traverse the membrane as a helical segment. Topologically, residues 277–298 (ETVVDLLKESDSMMVDPTNDIR) are extracellular. A helical membrane pass occupies residues 299 to 319 (IIGSITVVILLGISVAGMEWE). The Cytoplasmic portion of the chain corresponds to 320 to 323 (AKAQ). The chain crosses the membrane as a helical span at residues 324 to 344 (VILLVILLIGIANFFIGTVIP). The Extracellular segment spans residues 345–375 (SNNEKKSRGFFNYQASIFAENFGPSFTEGEG). A helical membrane pass occupies residues 376–396 (FFSVFAIFFPAATGILAGANI). Over 397–413 (SGDLEDPQDAIPRGTML) the chain is Cytoplasmic. The chain crosses the membrane as a helical span at residues 414–434 (AIFITTVAYIGVAICVRACVV). At 435–546 (RDATGSMNDT…NNEPLRGYFL (112 aa)) the chain is on the extracellular side. N-linked (GlcNAc...) asparagine glycosylation is found at Asn-442 and Asn-452. Helical transmembrane passes span 547 to 567 (TFVIAMAFILIAELNVIAPII) and 568 to 588 (SNFFLASYALINFSCFHASYA). At 589–605 (KSPGWRPAYGIYNMWVS) the chain is on the extracellular side. Residues 606-626 (LFGAILCCAVMFVINWWAAVI) form a helical membrane-spanning segment. Residues 627 to 1095 (TYVIELFLYI…NHKNVLTFYS (469 aa)) lie on the Cytoplasmic side of the membrane.

Belongs to the SLC12A transporter family. In terms of assembly, when phosphorylated, interacts with PPP3CB. Phosphorylated at Ser-87, Thr-96 and Thr-101 by OXSR1/OSR1 and STK39/SPAK downstream of WNK kinases (WNK1, WNK2, WNK3 or WNK4), promoting its activity. As to expression, expressed predominantly in kidney (at protein level).

Its subcellular location is the apical cell membrane. The catalysed reaction is K(+)(out) + 2 chloride(out) + Na(+)(out) = K(+)(in) + 2 chloride(in) + Na(+)(in). With respect to regulation, activated following phosphorylation by OXSR1/OSR1 and STK39/SPAK downstream of WNK kinases (WNK1, WNK2, WNK3 or WNK4). Its function is as follows. Renal sodium, potassium and chloride ion cotransporter that mediates the transepithelial NaCl reabsorption in the thick ascending limb and plays an essential role in the urinary concentration and volume regulation. Electrically silent transporter system. The polypeptide is Solute carrier family 12 member 1 (Slc12a1) (Rattus norvegicus (Rat)).